The primary structure comprises 219 residues: 2,3-bisphosphoglycerate-dependent phosphoglycerate mutase 2 (219 aa).

Residues 8 to 15 (RHGQSIWN), 21 to 22 (TG), Arg58, 85 to 88 (ERHY), Lys96, 112 to 113 (RR), and 156 to 157 (GN) each bind substrate. His9 functions as the Tele-phosphohistidine intermediate in the catalytic mechanism. Glu85 functions as the Proton donor/acceptor in the catalytic mechanism.

It belongs to the phosphoglycerate mutase family. BPG-dependent PGAM subfamily.

It catalyses the reaction (2R)-2-phosphoglycerate = (2R)-3-phosphoglycerate. The protein operates within carbohydrate degradation; glycolysis; pyruvate from D-glyceraldehyde 3-phosphate: step 3/5. Catalyzes the interconversion of 2-phosphoglycerate and 3-phosphoglycerate. In Gloeobacter violaceus (strain ATCC 29082 / PCC 7421), this protein is 2,3-bisphosphoglycerate-dependent phosphoglycerate mutase 2.